Consider the following 453-residue polypeptide: Armadillo repeat-containing X-linked protein 1 (453 aa).

At 1-6 (MGRTRE) the chain is on the mitochondrial intermembrane side. Mitochondrion outer membrane (MOM)-targeting sequence stretches follow at residues 1 to 6 (MGRTRE) and 26 to 36 (RLAWGRDENEK). The chain crosses the membrane as a helical; Signal-anchor span at residues 7 to 29 (AGCVAAGVVIGAGACYCVYRLAW). Residues 30 to 453 (GRDENEKIWD…VKVLKVLTKL (424 aa)) are Cytoplasmic-facing. Disordered regions lie at residues 58–77 (AKTNAGAGSGAKLQGDSEVK) and 132–182 (ISGN…RAPA). Residues 167 to 177 (GKSKGKARSKS) show a composition bias toward basic residues. ARM repeat units lie at residues 195–235 (PYKI…NNAA), 237–276 (SFNQNAIRELGGVPIIAKLIKTKDPIIREKTYNALNNLSV), 358–398 (PAMT…NIND), and 415–453 (SSLFFLFKESGVCVKKIKALANHNDLVVKVKVLKVLTKL).

The protein belongs to the eutherian X-chromosome-specific Armcx family. Interacts with MIRO1. As to expression, expressed at high levels ovary, heart, testis, prostate, brain, spleen and colon. Expressed at very low levels in liver and thymus. Not expressed in peripheral blood leukocytes. Not or reduced expressed in lung, prostate, colon, pancreas and ovarian carcinomas.

Its subcellular location is the mitochondrion. It localises to the mitochondrion outer membrane. Regulates mitochondrial transport during axon regeneration. Increases the proportion of motile mitochondria by recruiting stationary mitochondria into the motile pool. Enhances mitochondria movement and neurite growth in both adult axons and embryonic neurons. Promotes neuronal survival and axon regeneration after nerve injury. May link mitochondria to the Trak1-kinesin motor complex via its interaction with MIRO1. This Homo sapiens (Human) protein is Armadillo repeat-containing X-linked protein 1 (ARMCX1).